We begin with the raw amino-acid sequence, 169 residues long: Ribosome maturation factor RimP (169 aa).

It belongs to the RimP family.

The protein resides in the cytoplasm. Its function is as follows. Required for maturation of 30S ribosomal subunits. The chain is Ribosome maturation factor RimP from Streptomyces avermitilis (strain ATCC 31267 / DSM 46492 / JCM 5070 / NBRC 14893 / NCIMB 12804 / NRRL 8165 / MA-4680).